Here is a 555-residue protein sequence, read N- to C-terminus: 2-succinyl-5-enolpyruvyl-6-hydroxy-3-cyclohexene-1-carboxylate synthase (555 aa).

Belongs to the TPP enzyme family. MenD subfamily. As to quaternary structure, homodimer. It depends on Mg(2+) as a cofactor. The cofactor is Mn(2+). Requires thiamine diphosphate as cofactor.

It catalyses the reaction isochorismate + 2-oxoglutarate + H(+) = 5-enolpyruvoyl-6-hydroxy-2-succinyl-cyclohex-3-ene-1-carboxylate + CO2. The protein operates within quinol/quinone metabolism; 1,4-dihydroxy-2-naphthoate biosynthesis; 1,4-dihydroxy-2-naphthoate from chorismate: step 2/7. It participates in quinol/quinone metabolism; menaquinone biosynthesis. Catalyzes the thiamine diphosphate-dependent decarboxylation of 2-oxoglutarate and the subsequent addition of the resulting succinic semialdehyde-thiamine pyrophosphate anion to isochorismate to yield 2-succinyl-5-enolpyruvyl-6-hydroxy-3-cyclohexene-1-carboxylate (SEPHCHC). The polypeptide is 2-succinyl-5-enolpyruvyl-6-hydroxy-3-cyclohexene-1-carboxylate synthase (Kineococcus radiotolerans (strain ATCC BAA-149 / DSM 14245 / SRS30216)).